The primary structure comprises 396 residues: Phospholipase A1-II 4 (396 aa).

S221 (acyl-ester intermediate) is an active-site residue. Catalysis depends on charge relay system residues S221, D282, and H319.

It belongs to the AB hydrolase superfamily. Lipase family.

It localises to the cytoplasm. In terms of biological role, acylhydrolase that catalyzes the hydrolysis of phospholipids at the sn-1 position. In Oryza sativa subsp. japonica (Rice), this protein is Phospholipase A1-II 4.